A 359-amino-acid polypeptide reads, in one-letter code: DNA replication and repair protein RecF (359 aa).

30–37 (GPNGSGKT) contacts ATP.

The protein belongs to the RecF family.

The protein localises to the cytoplasm. Its function is as follows. The RecF protein is involved in DNA metabolism; it is required for DNA replication and normal SOS inducibility. RecF binds preferentially to single-stranded, linear DNA. It also seems to bind ATP. The sequence is that of DNA replication and repair protein RecF from Psychromonas ingrahamii (strain DSM 17664 / CCUG 51855 / 37).